Reading from the N-terminus, the 332-residue chain is Endo-1,4-beta-xylanase (332 aa).

The first 21 residues, 1-21, serve as a signal peptide directing secretion; that stretch reads MLSSTTLLAILSALALTSVQA. Residues 26–316 enclose the GH10 domain; it reads KNSLDYLANK…KSTYYVVQQA (291 aa). Glu-120 acts as the Proton donor in catalysis. A disulfide bridge connects residues Cys-128 and Cys-160. Glu-214 functions as the Nucleophile in the catalytic mechanism. Cys-247 and Cys-253 are oxidised to a cystine.

This sequence belongs to the glycosyl hydrolase 10 (cellulase F) family.

It is found in the secreted. The catalysed reaction is Endohydrolysis of (1-&gt;4)-beta-D-xylosidic linkages in xylans.. In terms of biological role, requires at least three xylose residues for catalytic activity. Does not have activity against xylobiose. The protein is Endo-1,4-beta-xylanase of Naganishia albida (Cryptococcus albidus).